We begin with the raw amino-acid sequence, 480 residues long: Proline--tRNA ligase (480 aa).

The protein belongs to the class-II aminoacyl-tRNA synthetase family. ProS type 3 subfamily. In terms of assembly, homodimer.

It localises to the cytoplasm. The enzyme catalyses tRNA(Pro) + L-proline + ATP = L-prolyl-tRNA(Pro) + AMP + diphosphate. In terms of biological role, catalyzes the attachment of proline to tRNA(Pro) in a two-step reaction: proline is first activated by ATP to form Pro-AMP and then transferred to the acceptor end of tRNA(Pro). This is Proline--tRNA ligase from Chloroflexus aggregans (strain MD-66 / DSM 9485).